Consider the following 144-residue polypeptide: Cytochrome c-type biogenesis protein CcmE (144 aa).

Topologically, residues 1–7 (MKPRHKR) are cytoplasmic. The helical; Signal-anchor for type II membrane protein transmembrane segment at 8-28 (ALMIVAALAVIGIAALLILNA) threads the bilayer. Over 29-144 (LNSNIALYVT…EQAQKNGSAK (116 aa)) the chain is Extracellular. 2 residues coordinate heme: histidine 121 and tyrosine 125.

The protein belongs to the CcmE/CycJ family.

The protein resides in the cell membrane. Heme chaperone required for the biogenesis of c-type cytochromes. Transiently binds heme delivered by CcmC and transfers the heme to apo-cytochromes in a process facilitated by CcmF and CcmH. This Polynucleobacter asymbioticus (strain DSM 18221 / CIP 109841 / QLW-P1DMWA-1) (Polynucleobacter necessarius subsp. asymbioticus) protein is Cytochrome c-type biogenesis protein CcmE.